The sequence spans 340 residues: Armadillo repeat-containing protein 12 (340 aa).

An interaction with TBC1D15 region spans residues 1-101; it reads MGKTIPRFLE…NITRCVYLLE (101 aa). 3 ARM repeats span residues 100–139, 179–218, and 278–318; these read LEAE…AFSG, LPDY…YLAQ, and SLHE…SLQC. The interval 321 to 340 is disordered; it reads DLGSRPSSCRPSHSCFKTGK. The segment covering 324–340 has biased composition (low complexity); the sequence is SRPSSCRPSHSCFKTGK.

In terms of assembly, interacts with TBC1D15, TBC1D21, GK2 and IMMT. Interacts with VDAC2 and VDAC3 in a TBC1D21-dependent manner. Interacts (via ARM domains) with RBBP4. As to expression, testis-specific.

It localises to the nucleus. It is found in the mitochondrion outer membrane. In terms of biological role, essential for male fertility and sperm mitochondrial sheath formation. Required for proper mitochondrial elongation and coiling along the flagellum during the formation of the mitochondrial sheath. Facilitates the growth and aggressiveness of neuroblastoma cells. Increases the EZH2 activity and H3K27me3 levels in a RBBP4-dependent manner, and facilitates the enrichment of polycomb repressive complex 2 and H3K27me3 on gene promoters, resulting in transcriptional repression of tumor suppressors affecting the proliferation, invasion, and metastasis of tumor cells. The chain is Armadillo repeat-containing protein 12 (Armc12) from Mus musculus (Mouse).